The sequence spans 251 residues: GTP cyclohydrolase 1 type 2 homolog (251 aa).

A divalent metal cation is bound by residues His63, His64, Asp101, His219, and Glu223.

Belongs to the GTP cyclohydrolase I type 2/NIF3 family. Toroid-shaped homohexamer. In the hexamer, 3 dimers assemble to form a ring-like structure surrounding a central hole.

In Haemophilus influenzae (strain ATCC 51907 / DSM 11121 / KW20 / Rd), this protein is GTP cyclohydrolase 1 type 2 homolog.